Here is a 334-residue protein sequence, read N- to C-terminus: Pantothenate synthetase (334 aa).

34–41 (MGALHEGH) is a binding site for ATP. The active-site Proton donor is histidine 41. Glutamine 71 serves as a coordination point for (R)-pantoate. Residue glutamine 71 coordinates beta-alanine. Residue 158–161 (GQKD) participates in ATP binding. Glutamine 164 lines the (R)-pantoate pocket. Residues valine 187 and 195-198 (LSSR) each bind ATP. Residues 288–334 (PLMLGTRGPAGEASPPNRERSEPGSAEQNKSPGEARTTPSGTSEASE) form a disordered region. The segment covering 313-334 (AEQNKSPGEARTTPSGTSEASE) has biased composition (polar residues).

It belongs to the pantothenate synthetase family. In terms of assembly, homodimer.

Its subcellular location is the cytoplasm. The enzyme catalyses (R)-pantoate + beta-alanine + ATP = (R)-pantothenate + AMP + diphosphate + H(+). The protein operates within cofactor biosynthesis; (R)-pantothenate biosynthesis; (R)-pantothenate from (R)-pantoate and beta-alanine: step 1/1. Its function is as follows. Catalyzes the condensation of pantoate with beta-alanine in an ATP-dependent reaction via a pantoyl-adenylate intermediate. The polypeptide is Pantothenate synthetase (Nocardioides sp. (strain ATCC BAA-499 / JS614)).